We begin with the raw amino-acid sequence, 530 residues long: Apolipoprotein N-acyltransferase (530 aa).

6 consecutive transmembrane segments (helical) span residues 19-39, 65-85, 96-116, 128-148, 169-189, and 197-217; these read LIAG…PGLL, WLAG…AFLV, FAVT…ALLY, LTFA…LTGF, LVGA…PAVW, and AATG…AIAL. In terms of domain architecture, CN hydrolase spans 232–485; the sequence is VQADIKQDLK…SGVIDAQIPG (254 aa). Glu274 serves as the catalytic Proton acceptor. Lys343 is a catalytic residue. Cys396 (nucleophile) is an active-site residue.

Belongs to the CN hydrolase family. Apolipoprotein N-acyltransferase subfamily.

The protein resides in the cell inner membrane. It carries out the reaction N-terminal S-1,2-diacyl-sn-glyceryl-L-cysteinyl-[lipoprotein] + a glycerophospholipid = N-acyl-S-1,2-diacyl-sn-glyceryl-L-cysteinyl-[lipoprotein] + a 2-acyl-sn-glycero-3-phospholipid + H(+). It functions in the pathway protein modification; lipoprotein biosynthesis (N-acyl transfer). Its function is as follows. Catalyzes the phospholipid dependent N-acylation of the N-terminal cysteine of apolipoprotein, the last step in lipoprotein maturation. The sequence is that of Apolipoprotein N-acyltransferase from Caulobacter vibrioides (strain ATCC 19089 / CIP 103742 / CB 15) (Caulobacter crescentus).